Consider the following 566-residue polypeptide: Transmembrane protein 151B (566 aa).

Over residues 1 to 11 the composition is skewed to low complexity; it reads MSPPGSAAGES. The disordered stretch occupies residues 1–25; sequence MSPPGSAAGESAAGGGGGGGGPGVS. Positions 12-23 are enriched in gly residues; that stretch reads AAGGGGGGGGPG. Transmembrane regions (helical) follow at residues 65–85 and 112–132; these read CLLL…CHVT and YVYI…VECW. The segment covering 495-512 has biased composition (polar residues); it reads VNEASCPTEQTRLSSQAS. The interval 495-529 is disordered; it reads VNEASCPTEQTRLSSQASMGDDEDDDEEEAGPPPP. Acidic residues predominate over residues 514 to 524; the sequence is GDDEDDDEEEA.

It belongs to the TMEM151 family.

Its subcellular location is the membrane. The polypeptide is Transmembrane protein 151B (TMEM151B) (Homo sapiens (Human)).